The primary structure comprises 496 residues: Probable zinc metalloprotease SNOG_06590 (496 aa).

The signal sequence occupies residues 1 to 20; sequence MRSSMFFAVCAAAALQTALS. Asn138 carries an N-linked (GlcNAc...) asparagine glycan. The Zn(2+) site is built by His161, Asp181, and Glu226. A glycan (N-linked (GlcNAc...) asparagine) is linked at Asn241. Residue Asp253 coordinates Zn(2+). N-linked (GlcNAc...) asparagine glycans are attached at residues Asn282, Asn361, Asn409, Asn415, and Asn457. A Fibronectin type-III domain is found at 402–496; the sequence is EPMNVGINTT…PFPFGCTRNC (95 aa).

This sequence belongs to the peptidase M28 family. M28B subfamily. Zn(2+) is required as a cofactor.

It localises to the secreted. The protein is Probable zinc metalloprotease SNOG_06590 of Phaeosphaeria nodorum (strain SN15 / ATCC MYA-4574 / FGSC 10173) (Glume blotch fungus).